Consider the following 528-residue polypeptide: Folylpolyglutamate synthase (528 aa).

An ATP-binding site is contributed by 104–107 (GKGG). Positions 134, 208, and 236 each coordinate Mg(2+). Residues Arg-351 and Asp-365 each coordinate ATP.

It belongs to the folylpolyglutamate synthase family. A monovalent cation is required as a cofactor.

The protein resides in the mitochondrion inner membrane. Its subcellular location is the mitochondrion matrix. It localises to the cytoplasm. The catalysed reaction is (6S)-5,6,7,8-tetrahydrofolyl-(gamma-L-Glu)(n) + L-glutamate + ATP = (6S)-5,6,7,8-tetrahydrofolyl-(gamma-L-Glu)(n+1) + ADP + phosphate + H(+). The protein operates within cofactor biosynthesis; tetrahydrofolylpolyglutamate biosynthesis. In terms of biological role, catalyzes conversion of folates to polyglutamate derivatives allowing concentration of folate compounds in the cell and the intracellular retention of these cofactors, which are important substrates for most of the folate-dependent enzymes that are involved in one-carbon transfer reactions involved in purine, pyrimidine and amino acid synthesis. This is Folylpolyglutamate synthase (met-6) from Neurospora crassa (strain ATCC 24698 / 74-OR23-1A / CBS 708.71 / DSM 1257 / FGSC 987).